Reading from the N-terminus, the 285-residue chain is Small ribosomal subunit protein mS23 (285 aa).

This sequence belongs to the mitochondrion-specific ribosomal protein mS23 family. In terms of assembly, component of the mitochondrial small ribosomal subunit.

It is found in the mitochondrion. This chain is Small ribosomal subunit protein mS23 (RSM25), found in Debaryomyces hansenii (strain ATCC 36239 / CBS 767 / BCRC 21394 / JCM 1990 / NBRC 0083 / IGC 2968) (Yeast).